A 1167-amino-acid chain; its full sequence is ATP-dependent helicase/deoxyribonuclease subunit B (1167 aa).

In terms of domain architecture, UvrD-like helicase ATP-binding spans Met1–Leu359. Gly8–Thr15 lines the ATP pocket. Residues Ala282 to Asp588 form the UvrD-like helicase C-terminal domain. [4Fe-4S] cluster contacts are provided by Cys804, Cys1126, Cys1129, and Cys1135.

Belongs to the helicase family. AddB/RexB type 1 subfamily. Heterodimer of AddA and AddB. Mg(2+) is required as a cofactor. The cofactor is [4Fe-4S] cluster.

In terms of biological role, the heterodimer acts as both an ATP-dependent DNA helicase and an ATP-dependent, dual-direction single-stranded exonuclease. Recognizes the chi site generating a DNA molecule suitable for the initiation of homologous recombination. The AddB subunit has 5' -&gt; 3' nuclease activity but not helicase activity. In Geobacillus kaustophilus (strain HTA426), this protein is ATP-dependent helicase/deoxyribonuclease subunit B.